A 1465-amino-acid chain; its full sequence is DNA polymerase III PolC-type (1465 aa).

The Exonuclease domain occupies 427 to 583 (YVVFDVETTG…YDAEATGRLL (157 aa)).

This sequence belongs to the DNA polymerase type-C family. PolC subfamily.

Its subcellular location is the cytoplasm. It carries out the reaction DNA(n) + a 2'-deoxyribonucleoside 5'-triphosphate = DNA(n+1) + diphosphate. Functionally, required for replicative DNA synthesis. This DNA polymerase also exhibits 3' to 5' exonuclease activity. The protein is DNA polymerase III PolC-type of Streptococcus pyogenes serotype M5 (strain Manfredo).